Reading from the N-terminus, the 61-residue chain is Short neurotoxin 1 (61 aa).

4 disulfides stabilise this stretch: cysteine 3–cysteine 23, cysteine 17–cysteine 40, cysteine 42–cysteine 53, and cysteine 54–cysteine 59.

The protein belongs to the three-finger toxin family. Short-chain subfamily. Type I alpha-neurotoxin sub-subfamily. In terms of tissue distribution, expressed by the venom gland.

It localises to the secreted. Binds to muscle nicotinic acetylcholine receptor (nAChR) and inhibit acetylcholine from binding to the receptor, thereby impairing neuromuscular transmission. In Naja philippinensis (Philippine cobra), this protein is Short neurotoxin 1.